Here is a 430-residue protein sequence, read N- to C-terminus: Tyrosine--tRNA ligase (430 aa).

Tyr-32 is an L-tyrosine binding site. The 'HIGH' region signature appears at 37–46 (PTADSLHIGH). L-tyrosine is bound by residues Tyr-172 and Gln-176. Positions 232–236 (KFGKT) match the 'KMSKS' region motif. Residue Lys-235 participates in ATP binding. The 69-residue stretch at 362-430 (ISLVDLLADA…KKSYYLIIVE (69 aa)) folds into the S4 RNA-binding domain.

The protein belongs to the class-I aminoacyl-tRNA synthetase family. TyrS type 1 subfamily. As to quaternary structure, homodimer.

The protein localises to the cytoplasm. The enzyme catalyses tRNA(Tyr) + L-tyrosine + ATP = L-tyrosyl-tRNA(Tyr) + AMP + diphosphate + H(+). Its function is as follows. Catalyzes the attachment of tyrosine to tRNA(Tyr) in a two-step reaction: tyrosine is first activated by ATP to form Tyr-AMP and then transferred to the acceptor end of tRNA(Tyr). The sequence is that of Tyrosine--tRNA ligase from Porphyromonas gingivalis (strain ATCC BAA-308 / W83).